Reading from the N-terminus, the 48-residue chain is Cytochrome c oxidase subunit 2 (48 aa).

Residues 1–14 (MAHPAQLGLQDASS) are Mitochondrial intermembrane-facing. Residues 15–45 (PIXEELLHFHEDALMIVFLISTLVLYIITTT) form a helical membrane-spanning segment. The Mitochondrial matrix segment spans residues 46–48 (VST).

This sequence belongs to the cytochrome c oxidase subunit 2 family. As to quaternary structure, component of the cytochrome c oxidase (complex IV, CIV), a multisubunit enzyme composed of 14 subunits. The complex is composed of a catalytic core of 3 subunits MT-CO1, MT-CO2 and MT-CO3, encoded in the mitochondrial DNA, and 11 supernumerary subunits COX4I, COX5A, COX5B, COX6A, COX6B, COX6C, COX7A, COX7B, COX7C, COX8 and NDUFA4, which are encoded in the nuclear genome. The complex exists as a monomer or a dimer and forms supercomplexes (SCs) in the inner mitochondrial membrane with NADH-ubiquinone oxidoreductase (complex I, CI) and ubiquinol-cytochrome c oxidoreductase (cytochrome b-c1 complex, complex III, CIII), resulting in different assemblies (supercomplex SCI(1)III(2)IV(1) and megacomplex MCI(2)III(2)IV(2)). Found in a complex with TMEM177, COA6, COX18, COX20, SCO1 and SCO2. Interacts with TMEM177 in a COX20-dependent manner. Interacts with COX20. Interacts with COX16. The cofactor is Cu cation.

The protein localises to the mitochondrion inner membrane. It catalyses the reaction 4 Fe(II)-[cytochrome c] + O2 + 8 H(+)(in) = 4 Fe(III)-[cytochrome c] + 2 H2O + 4 H(+)(out). Component of the cytochrome c oxidase, the last enzyme in the mitochondrial electron transport chain which drives oxidative phosphorylation. The respiratory chain contains 3 multisubunit complexes succinate dehydrogenase (complex II, CII), ubiquinol-cytochrome c oxidoreductase (cytochrome b-c1 complex, complex III, CIII) and cytochrome c oxidase (complex IV, CIV), that cooperate to transfer electrons derived from NADH and succinate to molecular oxygen, creating an electrochemical gradient over the inner membrane that drives transmembrane transport and the ATP synthase. Cytochrome c oxidase is the component of the respiratory chain that catalyzes the reduction of oxygen to water. Electrons originating from reduced cytochrome c in the intermembrane space (IMS) are transferred via the dinuclear copper A center (CU(A)) of subunit 2 and heme A of subunit 1 to the active site in subunit 1, a binuclear center (BNC) formed by heme A3 and copper B (CU(B)). The BNC reduces molecular oxygen to 2 water molecules using 4 electrons from cytochrome c in the IMS and 4 protons from the mitochondrial matrix. The protein is Cytochrome c oxidase subunit 2 (mt-co2) of Polypterus sp. (Bichir).